We begin with the raw amino-acid sequence, 218 residues long: ATP-dependent dethiobiotin synthetase BioD (218 aa).

Residue 10–15 participates in ATP binding; the sequence is NAGKTT. Residue Thr14 coordinates Mg(2+). Lys35 is a catalytic residue. Thr39 provides a ligand contact to substrate. Glu116 provides a ligand contact to Mg(2+). ATP contacts are provided by residues 116-119 and 176-177; these read EGAG and LR.

This sequence belongs to the dethiobiotin synthetase family. In terms of assembly, homodimer. Requires Mg(2+) as cofactor.

The protein localises to the cytoplasm. The enzyme catalyses (7R,8S)-7,8-diammoniononanoate + CO2 + ATP = (4R,5S)-dethiobiotin + ADP + phosphate + 3 H(+). The protein operates within cofactor biosynthesis; biotin biosynthesis; biotin from 7,8-diaminononanoate: step 1/2. In terms of biological role, catalyzes a mechanistically unusual reaction, the ATP-dependent insertion of CO2 between the N7 and N8 nitrogen atoms of 7,8-diaminopelargonic acid (DAPA, also called 7,8-diammoniononanoate) to form a ureido ring. This Helicobacter pylori (strain J99 / ATCC 700824) (Campylobacter pylori J99) protein is ATP-dependent dethiobiotin synthetase BioD.